Reading from the N-terminus, the 297-residue chain is 4-hydroxy-tetrahydrodipicolinate synthase (297 aa).

T46 provides a ligand contact to pyruvate. Y134 (proton donor/acceptor) is an active-site residue. K162 functions as the Schiff-base intermediate with substrate in the catalytic mechanism. I204 is a pyruvate binding site.

The protein belongs to the DapA family. In terms of assembly, homotetramer; dimer of dimers.

The protein localises to the cytoplasm. It catalyses the reaction L-aspartate 4-semialdehyde + pyruvate = (2S,4S)-4-hydroxy-2,3,4,5-tetrahydrodipicolinate + H2O + H(+). The protein operates within amino-acid biosynthesis; L-lysine biosynthesis via DAP pathway; (S)-tetrahydrodipicolinate from L-aspartate: step 3/4. Its function is as follows. Catalyzes the condensation of (S)-aspartate-beta-semialdehyde [(S)-ASA] and pyruvate to 4-hydroxy-tetrahydrodipicolinate (HTPA). This chain is 4-hydroxy-tetrahydrodipicolinate synthase, found in Stenotrophomonas maltophilia (strain K279a).